We begin with the raw amino-acid sequence, 532 residues long: Probable G-protein coupled receptor Mth-like 11 (532 aa).

Positions 1–20 (MGMFRVEYLLLGILVIGVRS) are cleaved as a signal peptide. At 21-229 (RDIPNCDFFD…VRKSRLSNAS (209 aa)) the chain is on the extracellular side. Intrachain disulfides connect Cys26-Cys80, Cys82-Cys87, Cys91-Cys184, Cys92-Cys103, and Cys145-Cys204. N-linked (GlcNAc...) asparagine glycosylation is present at Asn42. N-linked (GlcNAc...) asparagine glycans are attached at residues Asn110, Asn123, Asn166, Asn195, and Asn227. The helical transmembrane segment at 230-250 (IPVKFSSVFFMVITIAAYLWL) threads the bilayer. At 251 to 262 (PKFRSLHGKCCN) the chain is on the cytoplasmic side. A helical transmembrane segment spans residues 263 to 283 (LYFICLAITFLLNVISLFGIF). Residues 284-290 (ELKTPIC) lie on the Extracellular side of the membrane. The helical transmembrane segment at 291 to 311 (YLTGYAGYFTVMATFLWLSVI) threads the bilayer. The Cytoplasmic segment spans residues 312 to 339 (SFDVWRRFAMRKFQVFYKNKRSSFFNYN). A helical membrane pass occupies residues 340–360 (IIVWSSAGLLTCIIFLVDQFV). The Extracellular portion of the chain corresponds to 361-386 (ETNLDNPYNPAVGVFSCWIFTNGWSA). The helical transmembrane segment at 387 to 407 (TFYFYAPLAILIILNCASFFL) threads the bilayer. At 408–439 (TTRYIYVENKQNQKVLNNSEPQKLSRNHANYR) the chain is on the cytoplasmic side. Residues 440 to 460 (IYFRLFIIMGGSWFLEIIAFI) form a helical membrane-spanning segment. At 461–469 (CEMENMWKP) the chain is on the extracellular side. A helical transmembrane segment spans residues 470–490 (LIILNDYINCSQGIIIFVATF). At 491 to 532 (CNHEMFRLIRKRIQNRNITSLELTNTSRPVESEKMADVELGK) the chain is on the cytoplasmic side.

The protein belongs to the G-protein coupled receptor 2 family. Mth subfamily.

Its subcellular location is the cell membrane. In Drosophila melanogaster (Fruit fly), this protein is Probable G-protein coupled receptor Mth-like 11 (mthl11).